A 31-amino-acid polypeptide reads, in one-letter code: Aspartate aminotransferase, cytoplasmic (31 aa).

The protein belongs to the class-I pyridoxal-phosphate-dependent aminotransferase family. In terms of assembly, homodimer. The cofactor is pyridoxal 5'-phosphate.

Its subcellular location is the cytoplasm. The catalysed reaction is L-aspartate + 2-oxoglutarate = oxaloacetate + L-glutamate. The enzyme catalyses L-cysteine + 2-oxoglutarate = 2-oxo-3-sulfanylpropanoate + L-glutamate. It carries out the reaction (2S)-2-aminobutanoate + 2-oxoglutarate = 2-oxobutanoate + L-glutamate. It catalyses the reaction 3-sulfino-L-alanine + 2-oxoglutarate = 3-sulfinopyruvate + L-glutamate. In terms of biological role, biosynthesis of L-glutamate from L-aspartate or L-cysteine. Important regulator of levels of glutamate, the major excitatory neurotransmitter of the vertebrate central nervous system. Acts as a scavenger of glutamate in brain neuroprotection. The aspartate aminotransferase activity is involved in hepatic glucose synthesis during development and in adipocyte glyceroneogenesis. Using L-cysteine as substrate, regulates levels of mercaptopyruvate, an important source of hydrogen sulfide. Mercaptopyruvate is converted into H(2)S via the action of 3-mercaptopyruvate sulfurtransferase (3MST). Hydrogen sulfide is an important synaptic modulator and neuroprotectant in the brain. The protein is Aspartate aminotransferase, cytoplasmic of Oryctolagus cuniculus (Rabbit).